A 166-amino-acid polypeptide reads, in one-letter code: Regulator of ribonuclease activity A (166 aa).

Belongs to the RraA family. In terms of assembly, homotrimer. Binds to both RNA-binding sites in the C-terminal region of Rne and to RhlB.

The protein resides in the cytoplasm. In terms of biological role, globally modulates RNA abundance by binding to RNase E (Rne) and regulating its endonucleolytic activity. Can modulate Rne action in a substrate-dependent manner by altering the composition of the degradosome. Modulates RNA-binding and helicase activities of the degradosome. This chain is Regulator of ribonuclease activity A, found in Mannheimia succiniciproducens (strain KCTC 0769BP / MBEL55E).